Here is a 154-residue protein sequence, read N- to C-terminus: UPF0178 protein SPO3827 (154 aa).

Belongs to the UPF0178 family.

This chain is UPF0178 protein SPO3827, found in Ruegeria pomeroyi (strain ATCC 700808 / DSM 15171 / DSS-3) (Silicibacter pomeroyi).